We begin with the raw amino-acid sequence, 1395 residues long: DNA-directed RNA polymerase subunit beta' (1395 aa).

4 residues coordinate Zn(2+): C70, C72, C85, and C88. Mg(2+) is bound by residues D460, D462, and D464. The Zn(2+) site is built by C814, C888, C895, and C898.

This sequence belongs to the RNA polymerase beta' chain family. In terms of assembly, the RNAP catalytic core consists of 2 alpha, 1 beta, 1 beta' and 1 omega subunit. When a sigma factor is associated with the core the holoenzyme is formed, which can initiate transcription. Requires Mg(2+) as cofactor. The cofactor is Zn(2+).

The enzyme catalyses RNA(n) + a ribonucleoside 5'-triphosphate = RNA(n+1) + diphosphate. DNA-dependent RNA polymerase catalyzes the transcription of DNA into RNA using the four ribonucleoside triphosphates as substrates. This is DNA-directed RNA polymerase subunit beta' from Pseudoalteromonas atlantica (strain T6c / ATCC BAA-1087).